A 127-amino-acid chain; its full sequence is UPF0102 protein Glov_2230 (127 aa).

Belongs to the UPF0102 family.

The polypeptide is UPF0102 protein Glov_2230 (Trichlorobacter lovleyi (strain ATCC BAA-1151 / DSM 17278 / SZ) (Geobacter lovleyi)).